A 443-amino-acid chain; its full sequence is 26S proteasome regulatory subunit 4 homolog B (443 aa).

Disordered stretches follow at residues 1-55 (MGQG…LPTV) and 87-108 (RLKPQEEKAEEDRSKVDDLRGT). Composition is skewed to basic and acidic residues over residues 12–28 (QGDRKPDGGEKKEKKFE) and 87–106 (RLKPQEEKAEEDRSKVDDLR). 229 to 236 (GEPGTGKT) contributes to the ATP binding site. Glycyl lysine isopeptide (Lys-Gly) (interchain with G-Cter in ubiquitin) cross-links involve residues Lys-296 and Lys-433.

It belongs to the AAA ATPase family. Component of the 19S regulatory particle (RP/PA700) base subcomplex of the 26S proteasome. The 26S proteasome is composed of a core protease (CP), known as the 20S proteasome, capped at one or both ends by the 19S regulatory particle (RP/PA700). The RP/PA700 complex is composed of at least 17 different subunits in two subcomplexes, the base and the lid, which form the portions proximal and distal to the 20S proteolytic core, respectively. Preferentially expressed in the root and shoot apical meristem.

Its subcellular location is the cytoplasm. The protein localises to the nucleus. Functionally, the 26S protease is involved in the ATP-dependent degradation of ubiquitinated proteins. The regulatory (or ATPase) complex confers ATP dependency and substrate specificity to the 26S complex. Acts redundantly with RPT2A in the regulation of gametogenesis. With RPT2A plays a critical role in 26S proteasome assembly. This chain is 26S proteasome regulatory subunit 4 homolog B, found in Arabidopsis thaliana (Mouse-ear cress).